The chain runs to 576 residues: Sulfite reductase [NADPH] hemoprotein beta-component (576 aa).

[4Fe-4S] cluster-binding residues include C435, C441, C480, and C484. Residue C484 participates in siroheme binding.

The protein belongs to the nitrite and sulfite reductase 4Fe-4S domain family. In terms of assembly, alpha(8)-beta(8). The alpha component is a flavoprotein, the beta component is a hemoprotein. Siroheme is required as a cofactor. It depends on [4Fe-4S] cluster as a cofactor.

The enzyme catalyses hydrogen sulfide + 3 NADP(+) + 3 H2O = sulfite + 3 NADPH + 4 H(+). It functions in the pathway sulfur metabolism; hydrogen sulfide biosynthesis; hydrogen sulfide from sulfite (NADPH route): step 1/1. In terms of biological role, component of the sulfite reductase complex that catalyzes the 6-electron reduction of sulfite to sulfide. This is one of several activities required for the biosynthesis of L-cysteine from sulfate. This chain is Sulfite reductase [NADPH] hemoprotein beta-component, found in Yersinia pseudotuberculosis serotype O:1b (strain IP 31758).